The primary structure comprises 588 residues: Calcium/calmodulin-dependent protein kinase kinase 2 (588 aa).

The segment covering 1–11 (MSSCVSSQPTS) has biased composition (polar residues). 2 disordered regions span residues 1-34 (MSSC…KPCE) and 64-147 (DLNL…PTVE). Ser-2 carries the post-translational modification N-acetylserine. A phosphoserine mark is found at Ser-99, Ser-114, Ser-129, Ser-133, and Ser-137. The segment covering 101–116 (QEPSQGGPASSSNSLD) has biased composition (polar residues). Positions 124–139 (PSLSYSPASSPQSSPR) are enriched in low complexity. The Protein kinase domain maps to 165–446 (YTLKDEIGKG…VPEIKLHPWV (282 aa)). Residues 171-179 (IGKGSYGVV) and Lys-194 each bind ATP. The segment at 204 to 226 (QAGFPRRPPPRGARPAPGGCIQP) is RP domain. The interval 205–225 (AGFPRRPPPRGARPAPGGCIQ) is disordered. The active-site Proton acceptor is the Asp-312. The autoinhibitory domain stretch occupies residues 472–477 (ENSVKH). Residues 475-500 (VKHIPSLATVILVKTMIRKRSFGNPF) are calmodulin-binding. A phosphoserine mark is found at Ser-495, Ser-511, Thr-522, and Ser-572. A disordered region spans residues 497-588 (GNPFEGSRRE…LQPEEVMEPE (92 aa)). The segment covering 521–536 (PTREWEPLSEPKEARQ) has biased composition (basic and acidic residues). A compositionally biased stretch (pro residues) spans 570–580 (PGSPPRMPPLQ).

Belongs to the protein kinase superfamily. Ser/Thr protein kinase family. Interacts with calmodulin. Autophosphorylated and phosphorylated by PKA. Each isoform may show a different pattern of phosphorylation. In terms of tissue distribution, expressed in all tissues tested. A differential expression pattern compared to CAMKK1 is observed in the brain.

It is found in the nucleus. The protein resides in the cytoplasm. The protein localises to the cell projection. Its subcellular location is the neuron projection. It catalyses the reaction L-seryl-[protein] + ATP = O-phospho-L-seryl-[protein] + ADP + H(+). It carries out the reaction L-threonyl-[protein] + ATP = O-phospho-L-threonyl-[protein] + ADP + H(+). Its activity is regulated as follows. Activated by Ca(2+)/calmodulin. Binding of calmodulin may relieve intrasteric autoinhibition. Autophosphorylation does not alter activity or regulation by Ca(2+)/calmodulin. In part, activity is independent on Ca(2+)/calmodulin. Its function is as follows. Calcium/calmodulin-dependent protein kinase belonging to a proposed calcium-triggered signaling cascade involved in a number of cellular processes. Phosphorylates CAMK1, CAMK4 and CAMK1D. Efficiently phosphorylates 5'-AMP-activated protein kinase (AMPK) trimer, including that consisting of PRKAA1, PRKAB1 and PRKAG1. This phosphorylation is stimulated in response to Ca(2+) signals. May play a role in neurite growth. Isoform 2 may promote neurite elongation, while isoform 1 may promoter neurite branching. May be involved in hippocampal activation of CREB1. In Mus musculus (Mouse), this protein is Calcium/calmodulin-dependent protein kinase kinase 2 (Camkk2).